A 237-amino-acid polypeptide reads, in one-letter code: Cysteine-rich venom protein tigrin (237 aa).

The N-terminal stretch at 1 to 18 (MIVFILLSLAAVLRQSFG) is a signal peptide. The 129-residue stretch at 37–165 (VNIHNSFRRS…LYNYFYVCQY (129 aa)) folds into the SCP domain. 8 disulfide bridges follow: C74–C152, C91–C166, C147–C163, C185–C192, C188–C197, C201–C232, C210–C226, and C217–C230. In terms of domain architecture, ShKT spans 201-232 (CTHKDDYNNCNSLVSDCQSDWDKSHCPATCFC).

It belongs to the CRISP family. As to expression, expressed by the venom gland.

It is found in the secreted. Its function is as follows. This protein does not inhibit smooth muscle contraction elicited by high potassium levels or caffeine. The protein is Cysteine-rich venom protein tigrin of Rhabdophis tigrinus tigrinus (Tiger keelback snake).